A 210-amino-acid polypeptide reads, in one-letter code: HTH-type transcriptional repressor FabR (210 aa).

The HTH tetR-type domain occupies 10–70 (KTRRSLVEAA…TMVDESGLML (61 aa)). The segment at residues 33-52 (SLREVAREAGIAPTSFYRHF) is a DNA-binding region (H-T-H motif).

Homodimer.

It localises to the cytoplasm. Functionally, represses the transcription of fabB, involved in unsaturated fatty acid (UFA) biosynthesis. By controlling UFA production, FabR directly influences the physical properties of the membrane bilayer. This chain is HTH-type transcriptional repressor FabR, found in Salmonella choleraesuis (strain SC-B67).